We begin with the raw amino-acid sequence, 256 residues long: Thiazole synthase (256 aa).

The active-site Schiff-base intermediate with DXP is the Lys95. Residues Gly156, 182 to 183 (AG), and 204 to 205 (NT) each bind 1-deoxy-D-xylulose 5-phosphate.

This sequence belongs to the ThiG family. As to quaternary structure, homotetramer. Forms heterodimers with either ThiH or ThiS.

It is found in the cytoplasm. The enzyme catalyses [ThiS sulfur-carrier protein]-C-terminal-Gly-aminoethanethioate + 2-iminoacetate + 1-deoxy-D-xylulose 5-phosphate = [ThiS sulfur-carrier protein]-C-terminal Gly-Gly + 2-[(2R,5Z)-2-carboxy-4-methylthiazol-5(2H)-ylidene]ethyl phosphate + 2 H2O + H(+). It participates in cofactor biosynthesis; thiamine diphosphate biosynthesis. In terms of biological role, catalyzes the rearrangement of 1-deoxy-D-xylulose 5-phosphate (DXP) to produce the thiazole phosphate moiety of thiamine. Sulfur is provided by the thiocarboxylate moiety of the carrier protein ThiS. In vitro, sulfur can be provided by H(2)S. The polypeptide is Thiazole synthase (Escherichia coli O7:K1 (strain IAI39 / ExPEC)).